The chain runs to 470 residues: Fumarate reductase 1 (470 aa).

6–20 contributes to the FAD binding site; the sequence is VVVIGTGLAGLAAAN. At Ser66 the chain carries Phosphoserine. Residues His249 and Arg272 contribute to the active site.

Belongs to the FAD-dependent oxidoreductase 2 family. FRD/SDH subfamily. FAD serves as cofactor. The N-terminus is blocked.

It localises to the cytoplasm. It catalyses the reaction succinate + NAD(+) = fumarate + NADH + H(+). Irreversibly catalyzes the reduction of fumarate to succinate. Together with the second isozyme of soluble fumarate reductase (OSM1), essential for anaerobic growth. Involved in maintaining redox balance. Reduction of fumarate is the main source of succinate during fermentation, and under anaerobic conditions, the formation of succinate is strictly required for the reoxidation of FADH(2). This Saccharomyces cerevisiae (strain ATCC 204508 / S288c) (Baker's yeast) protein is Fumarate reductase 1 (FRD1).